Consider the following 440-residue polypeptide: Probable D-serine dehydratase (440 aa).

Position 111 is an N6-(pyridoxal phosphate)lysine (Lys111).

The protein belongs to the serine/threonine dehydratase family. DsdA subfamily. Pyridoxal 5'-phosphate is required as a cofactor.

It catalyses the reaction D-serine = pyruvate + NH4(+). The sequence is that of Probable D-serine dehydratase from Rhizobium leguminosarum bv. trifolii (strain WSM2304).